A 264-amino-acid chain; its full sequence is Phosphate import ATP-binding protein PstB (264 aa).

Positions 11-250 constitute an ABC transporter domain; sequence LKAEALSVYY…DTTEKIFDSP (240 aa). 43–50 provides a ligand contact to ATP; that stretch reads GPSGCGKS.

The protein belongs to the ABC transporter superfamily. Phosphate importer (TC 3.A.1.7) family. The complex is composed of two ATP-binding proteins (PstB), two transmembrane proteins (PstC and PstA) and a solute-binding protein (PstS).

The protein localises to the cell inner membrane. It catalyses the reaction phosphate(out) + ATP + H2O = ADP + 2 phosphate(in) + H(+). Functionally, part of the ABC transporter complex PstSACB involved in phosphate import. Responsible for energy coupling to the transport system. This chain is Phosphate import ATP-binding protein PstB, found in Synechococcus sp. (strain ATCC 27144 / PCC 6301 / SAUG 1402/1) (Anacystis nidulans).